Reading from the N-terminus, the 277-residue chain is Pantothenate synthetase (277 aa).

28-35 serves as a coordination point for ATP; sequence MGALHSGH. Residue histidine 35 is the Proton donor of the active site. Glutamine 59 contributes to the (R)-pantoate binding site. Position 59 (glutamine 59) interacts with beta-alanine. Residues 145–148, valine 174, and 182–185 each bind ATP; these read GEKD and LSSR.

The protein belongs to the pantothenate synthetase family. In terms of assembly, homodimer.

The protein localises to the cytoplasm. It carries out the reaction (R)-pantoate + beta-alanine + ATP = (R)-pantothenate + AMP + diphosphate + H(+). It participates in cofactor biosynthesis; (R)-pantothenate biosynthesis; (R)-pantothenate from (R)-pantoate and beta-alanine: step 1/1. In terms of biological role, catalyzes the condensation of pantoate with beta-alanine in an ATP-dependent reaction via a pantoyl-adenylate intermediate. The polypeptide is Pantothenate synthetase (Anaplasma marginale (strain St. Maries)).